The chain runs to 104 residues: Iron-sulfur cluster assembly protein CyaY (104 aa).

The protein belongs to the frataxin family.

In terms of biological role, involved in iron-sulfur (Fe-S) cluster assembly. May act as a regulator of Fe-S biogenesis. The chain is Iron-sulfur cluster assembly protein CyaY from Vibrio atlanticus (strain LGP32) (Vibrio splendidus (strain Mel32)).